We begin with the raw amino-acid sequence, 248 residues long: 3-deoxy-manno-octulosonate cytidylyltransferase (248 aa).

The protein belongs to the KdsB family.

The protein localises to the cytoplasm. The enzyme catalyses 3-deoxy-alpha-D-manno-oct-2-ulosonate + CTP = CMP-3-deoxy-beta-D-manno-octulosonate + diphosphate. It functions in the pathway nucleotide-sugar biosynthesis; CMP-3-deoxy-D-manno-octulosonate biosynthesis; CMP-3-deoxy-D-manno-octulosonate from 3-deoxy-D-manno-octulosonate and CTP: step 1/1. It participates in bacterial outer membrane biogenesis; lipopolysaccharide biosynthesis. Its function is as follows. Activates KDO (a required 8-carbon sugar) for incorporation into bacterial lipopolysaccharide in Gram-negative bacteria. This chain is 3-deoxy-manno-octulosonate cytidylyltransferase, found in Christiangramia forsetii (strain DSM 17595 / CGMCC 1.15422 / KT0803) (Gramella forsetii).